Here is a 345-residue protein sequence, read N- to C-terminus: Ribonucleoside-diphosphate reductase subunit beta (345 aa).

Positions 88, 118, and 121 each coordinate Fe cation. Tyr-125 is an active-site residue. 3 residues coordinate Fe cation: Glu-185, Glu-219, and His-222.

It belongs to the ribonucleoside diphosphate reductase small chain family. As to quaternary structure, tetramer of two alpha and two beta subunits. It depends on Fe cation as a cofactor.

It catalyses the reaction a 2'-deoxyribonucleoside 5'-diphosphate + [thioredoxin]-disulfide + H2O = a ribonucleoside 5'-diphosphate + [thioredoxin]-dithiol. Functionally, provides the precursors necessary for DNA synthesis. Catalyzes the biosynthesis of deoxyribonucleotides from the corresponding ribonucleotides. This is Ribonucleoside-diphosphate reductase subunit beta (nrdB) from Halalkalibacterium halodurans (strain ATCC BAA-125 / DSM 18197 / FERM 7344 / JCM 9153 / C-125) (Bacillus halodurans).